Consider the following 556-residue polypeptide: Dihydroxy-acid dehydratase (556 aa).

Residue Asp-81 participates in Mg(2+) binding. Cys-122 lines the [2Fe-2S] cluster pocket. 2 residues coordinate Mg(2+): Asp-123 and Lys-124. Lys-124 bears the N6-carboxylysine mark. Position 196 (Cys-196) interacts with [2Fe-2S] cluster. Glu-444 contributes to the Mg(2+) binding site. Ser-470 serves as the catalytic Proton acceptor.

The protein belongs to the IlvD/Edd family. In terms of assembly, homodimer. It depends on [2Fe-2S] cluster as a cofactor. Mg(2+) is required as a cofactor.

The enzyme catalyses (2R)-2,3-dihydroxy-3-methylbutanoate = 3-methyl-2-oxobutanoate + H2O. It carries out the reaction (2R,3R)-2,3-dihydroxy-3-methylpentanoate = (S)-3-methyl-2-oxopentanoate + H2O. It functions in the pathway amino-acid biosynthesis; L-isoleucine biosynthesis; L-isoleucine from 2-oxobutanoate: step 3/4. The protein operates within amino-acid biosynthesis; L-valine biosynthesis; L-valine from pyruvate: step 3/4. Its function is as follows. Functions in the biosynthesis of branched-chain amino acids. Catalyzes the dehydration of (2R,3R)-2,3-dihydroxy-3-methylpentanoate (2,3-dihydroxy-3-methylvalerate) into 2-oxo-3-methylpentanoate (2-oxo-3-methylvalerate) and of (2R)-2,3-dihydroxy-3-methylbutanoate (2,3-dihydroxyisovalerate) into 2-oxo-3-methylbutanoate (2-oxoisovalerate), the penultimate precursor to L-isoleucine and L-valine, respectively. The chain is Dihydroxy-acid dehydratase from Syntrophotalea carbinolica (strain DSM 2380 / NBRC 103641 / GraBd1) (Pelobacter carbinolicus).